We begin with the raw amino-acid sequence, 181 residues long: ATP synthase subunit delta (181 aa).

Belongs to the ATPase delta chain family. As to quaternary structure, F-type ATPases have 2 components, F(1) - the catalytic core - and F(0) - the membrane proton channel. F(1) has five subunits: alpha(3), beta(3), gamma(1), delta(1), epsilon(1). F(0) has three main subunits: a(1), b(2) and c(10-14). The alpha and beta chains form an alternating ring which encloses part of the gamma chain. F(1) is attached to F(0) by a central stalk formed by the gamma and epsilon chains, while a peripheral stalk is formed by the delta and b chains.

Its subcellular location is the cell inner membrane. F(1)F(0) ATP synthase produces ATP from ADP in the presence of a proton or sodium gradient. F-type ATPases consist of two structural domains, F(1) containing the extramembraneous catalytic core and F(0) containing the membrane proton channel, linked together by a central stalk and a peripheral stalk. During catalysis, ATP synthesis in the catalytic domain of F(1) is coupled via a rotary mechanism of the central stalk subunits to proton translocation. Its function is as follows. This protein is part of the stalk that links CF(0) to CF(1). It either transmits conformational changes from CF(0) to CF(1) or is implicated in proton conduction. This Hyphomonas neptunium (strain ATCC 15444) protein is ATP synthase subunit delta.